We begin with the raw amino-acid sequence, 23 residues long: Maculatin-1.2 (23 aa).

Residue Ala23 is modified to Alanine amide.

Expressed by the skin dorsal glands.

The protein localises to the secreted. Its function is as follows. Shows antibacterial activity against S.aureus and S.uberis. This is Maculatin-1.2 from Ranoidea genimaculata (Brown-spotted tree frog).